The sequence spans 249 residues: Ubiquinone/menaquinone biosynthesis C-methyltransferase UbiE (249 aa).

S-adenosyl-L-methionine-binding positions include T72, D93, and D121 to A122.

This sequence belongs to the class I-like SAM-binding methyltransferase superfamily. MenG/UbiE family.

It carries out the reaction a 2-demethylmenaquinol + S-adenosyl-L-methionine = a menaquinol + S-adenosyl-L-homocysteine + H(+). It catalyses the reaction a 2-methoxy-6-(all-trans-polyprenyl)benzene-1,4-diol + S-adenosyl-L-methionine = a 5-methoxy-2-methyl-3-(all-trans-polyprenyl)benzene-1,4-diol + S-adenosyl-L-homocysteine + H(+). Its pathway is quinol/quinone metabolism; menaquinone biosynthesis; menaquinol from 1,4-dihydroxy-2-naphthoate: step 2/2. It functions in the pathway cofactor biosynthesis; ubiquinone biosynthesis. Its function is as follows. Methyltransferase required for the conversion of demethylmenaquinol (DMKH2) to menaquinol (MKH2) and the conversion of 2-polyprenyl-6-methoxy-1,4-benzoquinol (DDMQH2) to 2-polyprenyl-3-methyl-6-methoxy-1,4-benzoquinol (DMQH2). The protein is Ubiquinone/menaquinone biosynthesis C-methyltransferase UbiE of Cellvibrio japonicus (strain Ueda107) (Pseudomonas fluorescens subsp. cellulosa).